A 291-amino-acid chain; its full sequence is MASLKDMRVRIASTKATQKITKAMQMVAASKLRRAQMAAEAARPYAEKMEAVISNIAGAAAGSPGAPVLLAGNGKDQVHLLLVCTGERGLSGAFNSSIVRLARERAYELMSQGKTVKFFCVGRKGYEQLRRNFEKQIIDNVELRSVRQIGFVNAEDIAKKVIARFNAGEFDVCTLFYSRFKSVISQIPTAQQLIPLEVTAPAAGTVATSYEYEPEEDEILSGLLPRNLAVQIFRALLENNASFYGAQMSAMDNATRNAGEMIRKQTLVYNRTRQAMITKELIEIISGAEAI.

Belongs to the ATPase gamma chain family. F-type ATPases have 2 components, CF(1) - the catalytic core - and CF(0) - the membrane proton channel. CF(1) has five subunits: alpha(3), beta(3), gamma(1), delta(1), epsilon(1). CF(0) has three main subunits: a, b and c.

The protein resides in the cell inner membrane. In terms of biological role, produces ATP from ADP in the presence of a proton gradient across the membrane. The gamma chain is believed to be important in regulating ATPase activity and the flow of protons through the CF(0) complex. This Rhodopseudomonas palustris (strain ATCC BAA-98 / CGA009) protein is ATP synthase gamma chain.